A 553-amino-acid polypeptide reads, in one-letter code: Glycerol kinase 2 (553 aa).

Thr-20 contacts substrate. Arg-24 contributes to the ATP binding site. Substrate contacts are provided by Arg-94, Tyr-148, and Asp-259. Residues Thr-281, Gly-326, and 427-431 (GMTNN) contribute to the ATP site. The chain crosses the membrane as a helical span at residues 526–546 (IFSSMPLGFFIVSSMVMLIGA).

This sequence belongs to the FGGY kinase family. In terms of assembly, interacts with ARMC12 and PLD6.

It localises to the mitochondrion outer membrane. The protein resides in the cytoplasm. It catalyses the reaction glycerol + ATP = sn-glycerol 3-phosphate + ADP + H(+). It participates in polyol metabolism; glycerol degradation via glycerol kinase pathway; sn-glycerol 3-phosphate from glycerol: step 1/1. Functionally, key enzyme in the regulation of glycerol uptake and metabolism. Essential for male fertility and sperm mitochondrial sheath formation. Required for proper arrangement of crescent-like mitochondria to form the mitochondrial sheath during spermatogenesis. Can induce mitochondrial clustering through interactions with PLD6 and up-regulation of phosphatidic acid synthesis in the mitochondria. The polypeptide is Glycerol kinase 2 (GK2) (Macaca fascicularis (Crab-eating macaque)).